The sequence spans 442 residues: D-serine dehydratase (442 aa).

Residue Lys118 is modified to N6-(pyridoxal phosphate)lysine.

This sequence belongs to the serine/threonine dehydratase family. DsdA subfamily. In terms of assembly, monomer. The cofactor is pyridoxal 5'-phosphate.

The enzyme catalyses D-serine = pyruvate + NH4(+). This chain is D-serine dehydratase, found in Escherichia coli O81 (strain ED1a).